A 3184-amino-acid chain; its full sequence is Cilia and flagella-associated protein 47 (3184 aa).

Positions 1729–1851 (SDSERILLSW…LCVYLYERLP (123 aa)) constitute a Calponin-homology (CH) domain. The segment at 2491 to 2514 (RDEEESQEETDTEKDFSSQETPSD) is disordered. The segment covering 2493 to 2502 (EEESQEETDT) has biased composition (acidic residues).

Interacts with CFAP65. Highly expressed in spermatzoa (at protein level).

It localises to the cytoplasm. The protein resides in the cytoskeleton. The protein localises to the flagellum basal body. Plays a role in flagellar formation and sperm motility. The protein is Cilia and flagella-associated protein 47 of Mus musculus (Mouse).